The chain runs to 107 residues: MSKVVYVSHDGTRRELDVADGVSLMQAAVSNGIYDIVGDCGGSASCATCHVYVNEAFTDKVPAANEREIGMLECVTAELKPNSRLCCQIIMTPELDGIVVDVPDRQW.

The 2Fe-2S ferredoxin-type domain occupies Ser-2–Gln-106. [2Fe-2S] cluster-binding residues include Cys-40, Cys-46, Cys-49, and Cys-87.

The protein belongs to the adrenodoxin/putidaredoxin family. As to quaternary structure, monomer. The cofactor is [2Fe-2S] cluster.

In terms of biological role, the oxidation of camphor by cytochrome P450-CAM requires the participation of a flavoprotein, putidaredoxin reductase, and an iron-sulfur protein, putidaredoxin, to mediate the transfer of electrons from NADH to P450 for oxygen activation. In Pseudomonas putida (Arthrobacter siderocapsulatus), this protein is Putidaredoxin (camB).